The following is a 602-amino-acid chain: Elongation factor 4 (602 aa).

A tr-type G domain is found at 7–188; the sequence is ENIRNFSIIA…AIVELIPPPK (182 aa). GTP is bound by residues 19–24 and 135–138; these read DHGKST and NKID.

It belongs to the TRAFAC class translation factor GTPase superfamily. Classic translation factor GTPase family. LepA subfamily.

The protein resides in the cell inner membrane. It catalyses the reaction GTP + H2O = GDP + phosphate + H(+). Its function is as follows. Required for accurate and efficient protein synthesis under certain stress conditions. May act as a fidelity factor of the translation reaction, by catalyzing a one-codon backward translocation of tRNAs on improperly translocated ribosomes. Back-translocation proceeds from a post-translocation (POST) complex to a pre-translocation (PRE) complex, thus giving elongation factor G a second chance to translocate the tRNAs correctly. Binds to ribosomes in a GTP-dependent manner. The chain is Elongation factor 4 from Chlamydia abortus (strain DSM 27085 / S26/3) (Chlamydophila abortus).